A 166-amino-acid chain; its full sequence is Small ribosomal subunit protein uS5 (166 aa).

Positions 11–74 constitute an S5 DRBM domain; the sequence is LQEKLVAVNR…EQARRNMVKV (64 aa).

The protein belongs to the universal ribosomal protein uS5 family. As to quaternary structure, part of the 30S ribosomal subunit. Contacts proteins S4 and S8.

Functionally, with S4 and S12 plays an important role in translational accuracy. In terms of biological role, located at the back of the 30S subunit body where it stabilizes the conformation of the head with respect to the body. The chain is Small ribosomal subunit protein uS5 from Tolumonas auensis (strain DSM 9187 / NBRC 110442 / TA 4).